The primary structure comprises 192 residues: Segregation and condensation protein B (192 aa).

The protein belongs to the ScpB family. Homodimer. Homodimerization may be required to stabilize the binding of ScpA to the Smc head domains. Component of a cohesin-like complex composed of ScpA, ScpB and the Smc homodimer, in which ScpA and ScpB bind to the head domain of Smc. The presence of the three proteins is required for the association of the complex with DNA.

It is found in the cytoplasm. Functionally, participates in chromosomal partition during cell division. May act via the formation of a condensin-like complex containing Smc and ScpA that pull DNA away from mid-cell into both cell halves. The protein is Segregation and condensation protein B of Mycoplasma mobile (strain ATCC 43663 / 163K / NCTC 11711) (Mesomycoplasma mobile).